The following is a 528-amino-acid chain: Phosphoenolpyruvate carboxykinase (ATP) (528 aa).

Positions 56, 192, and 198 each coordinate substrate. Residues lysine 198, histidine 217, and 233-241 (GLSGTGKTT) contribute to the ATP site. 2 residues coordinate Mn(2+): lysine 198 and histidine 217. Aspartate 254 contacts Mn(2+). The ATP site is built by glutamate 282, arginine 319, and threonine 444. Arginine 319 serves as a coordination point for substrate.

It belongs to the phosphoenolpyruvate carboxykinase (ATP) family. Mn(2+) is required as a cofactor.

The protein resides in the cytoplasm. It carries out the reaction oxaloacetate + ATP = phosphoenolpyruvate + ADP + CO2. The protein operates within carbohydrate biosynthesis; gluconeogenesis. Its function is as follows. Involved in the gluconeogenesis. Catalyzes the conversion of oxaloacetate (OAA) to phosphoenolpyruvate (PEP) through direct phosphoryl transfer between the nucleoside triphosphate and OAA. The chain is Phosphoenolpyruvate carboxykinase (ATP) from Bacillus cytotoxicus (strain DSM 22905 / CIP 110041 / 391-98 / NVH 391-98).